The sequence spans 220 residues: Fructose-6-phosphate aldolase (220 aa).

Residue Lys-85 is the Schiff-base intermediate with substrate of the active site.

This sequence belongs to the transaldolase family. Type 3A subfamily. In terms of assembly, homodecamer.

Its subcellular location is the cytoplasm. It carries out the reaction beta-D-fructose 6-phosphate = dihydroxyacetone + D-glyceraldehyde 3-phosphate. Catalyzes the reversible formation of fructose 6-phosphate from dihydroxyacetone and D-glyceraldehyde 3-phosphate via an aldolization reaction. The sequence is that of Fructose-6-phosphate aldolase from Salmonella choleraesuis (strain SC-B67).